Reading from the N-terminus, the 212-residue chain is Protein-L-isoaspartate O-methyltransferase (212 aa).

S61 is an active-site residue.

Belongs to the methyltransferase superfamily. L-isoaspartyl/D-aspartyl protein methyltransferase family.

Its subcellular location is the cytoplasm. It carries out the reaction [protein]-L-isoaspartate + S-adenosyl-L-methionine = [protein]-L-isoaspartate alpha-methyl ester + S-adenosyl-L-homocysteine. Functionally, catalyzes the methyl esterification of L-isoaspartyl residues in peptides and proteins that result from spontaneous decomposition of normal L-aspartyl and L-asparaginyl residues. It plays a role in the repair and/or degradation of damaged proteins. This Pseudoalteromonas atlantica (strain T6c / ATCC BAA-1087) protein is Protein-L-isoaspartate O-methyltransferase.